Consider the following 439-residue polypeptide: Arginine biosynthesis bifunctional protein ArgJ, mitochondrial (439 aa).

Residues Thr-175, Lys-201, Thr-212, Glu-301, Asn-434, and Ser-439 each coordinate substrate. The active-site Nucleophile is Thr-212.

This sequence belongs to the ArgJ family. In terms of assembly, heterodimer of an alpha and a beta chain. Post-translationally, the alpha and beta chains are autoproteolytically processed from a single precursor protein within the mitochondrion.

It localises to the mitochondrion matrix. The catalysed reaction is N(2)-acetyl-L-ornithine + L-glutamate = N-acetyl-L-glutamate + L-ornithine. The enzyme catalyses L-glutamate + acetyl-CoA = N-acetyl-L-glutamate + CoA + H(+). The protein operates within amino-acid biosynthesis; L-arginine biosynthesis; L-ornithine and N-acetyl-L-glutamate from L-glutamate and N(2)-acetyl-L-ornithine (cyclic): step 1/1. Its pathway is amino-acid biosynthesis; L-arginine biosynthesis; N(2)-acetyl-L-ornithine from L-glutamate: step 1/4. Functionally, catalyzes two activities which are involved in the cyclic version of arginine biosynthesis: the synthesis of acetylglutamate from glutamate and acetyl-CoA, and of ornithine by transacetylation between acetylornithine and glutamate. The sequence is that of Arginine biosynthesis bifunctional protein ArgJ, mitochondrial (ECM42) from Candida albicans (strain SC5314 / ATCC MYA-2876) (Yeast).